A 127-amino-acid polypeptide reads, in one-letter code: Large ribosomal subunit protein bL17 (127 aa).

It belongs to the bacterial ribosomal protein bL17 family. As to quaternary structure, part of the 50S ribosomal subunit. Contacts protein L32.

The polypeptide is Large ribosomal subunit protein bL17 (Lacticaseibacillus casei (strain BL23) (Lactobacillus casei)).